A 556-amino-acid chain; its full sequence is 2-succinyl-5-enolpyruvyl-6-hydroxy-3-cyclohexene-1-carboxylate synthase (556 aa).

This sequence belongs to the TPP enzyme family. MenD subfamily. In terms of assembly, homodimer. Mg(2+) serves as cofactor. It depends on Mn(2+) as a cofactor. Thiamine diphosphate is required as a cofactor.

It catalyses the reaction isochorismate + 2-oxoglutarate + H(+) = 5-enolpyruvoyl-6-hydroxy-2-succinyl-cyclohex-3-ene-1-carboxylate + CO2. Its pathway is quinol/quinone metabolism; 1,4-dihydroxy-2-naphthoate biosynthesis; 1,4-dihydroxy-2-naphthoate from chorismate: step 2/7. It participates in quinol/quinone metabolism; menaquinone biosynthesis. Functionally, catalyzes the thiamine diphosphate-dependent decarboxylation of 2-oxoglutarate and the subsequent addition of the resulting succinic semialdehyde-thiamine pyrophosphate anion to isochorismate to yield 2-succinyl-5-enolpyruvyl-6-hydroxy-3-cyclohexene-1-carboxylate (SEPHCHC). The chain is 2-succinyl-5-enolpyruvyl-6-hydroxy-3-cyclohexene-1-carboxylate synthase from Staphylococcus haemolyticus (strain JCSC1435).